Here is a 118-residue protein sequence, read N- to C-terminus: Large ribosomal subunit protein bL19 (118 aa).

The protein belongs to the bacterial ribosomal protein bL19 family.

This protein is located at the 30S-50S ribosomal subunit interface and may play a role in the structure and function of the aminoacyl-tRNA binding site. In Frankia casuarinae (strain DSM 45818 / CECT 9043 / HFP020203 / CcI3), this protein is Large ribosomal subunit protein bL19.